The sequence spans 323 residues: Oligopeptide transport ATP-binding protein OppD (323 aa).

Residues 5 to 254 (LDVKNLYVRF…PTHPYSIGLM (250 aa)) enclose the ABC transporter domain. Residue 41 to 48 (GESGSGKS) participates in ATP binding.

It belongs to the ABC transporter superfamily. In terms of assembly, the complex is composed of two ATP-binding proteins (OppD and OppF), two transmembrane proteins (OppB and OppC) and a solute-binding protein (OppA or MppA).

Its subcellular location is the cell inner membrane. It carries out the reaction a [peptide](out) + ATP + H2O = a [peptide](in) + ADP + phosphate + H(+). Its function is as follows. Part of the ABC transporter complex OppABCDF involved in the uptake of oligopeptides. Probably responsible for energy coupling to the transport system. The polypeptide is Oligopeptide transport ATP-binding protein OppD (oppD) (Haemophilus influenzae (strain ATCC 51907 / DSM 11121 / KW20 / Rd)).